The sequence spans 291 residues: MLRREARLRREYLYRKAREEAQRSAQERKERLRRALEENRLIPTELRREALALQGSLEFDDAGGEGVTSHVDDEYRWAGVEDPKVMITTSRDPSSRLKMFAKELKLVFPGAQRMNRGRHEVGALVRACKANGVTDLLVVHEHRGTPVGLIVSHLPFGPTAYFTLCNVVMRHDIPDLGTMSEAKPHLITHGFSSRLGKRVSDILRYLFPVPKDDSHRVITFANQDDYISFRHHVYKKTDHRNVELTEVGPRFELKLYMIRLGTLEQEATADVEWRWHPYTNTARKRVFLSTE.

The Brix domain maps to 83 to 264 (PKVMITTSRD…LYMIRLGTLE (182 aa)).

In terms of assembly, part of the small subunit (SSU) processome, composed of more than 70 proteins and the RNA chaperone small nucleolar RNA (snoRNA) U3. Component of a heterotrimeric complex containing IMP3, IMP4 and MPHOSPH10. Interacts with MPHOSPH10.

Its subcellular location is the nucleus. The protein resides in the nucleolus. In terms of biological role, component of the 60-80S U3 small nucleolar ribonucleoprotein (U3 snoRNP). Required for the early cleavages during pre-18S ribosomal RNA processing. Part of the small subunit (SSU) processome, first precursor of the small eukaryotic ribosomal subunit. During the assembly of the SSU processome in the nucleolus, many ribosome biogenesis factors, an RNA chaperone and ribosomal proteins associate with the nascent pre-rRNA and work in concert to generate RNA folding, modifications, rearrangements and cleavage as well as targeted degradation of pre-ribosomal RNA by the RNA exosome. In Homo sapiens (Human), this protein is U3 small nucleolar ribonucleoprotein protein IMP4.